Consider the following 122-residue polypeptide: Large ribosomal subunit protein uL18 (122 aa).

The segment covering 1 to 19 has biased composition (basic residues); it reads MTKLSRKLQTQKRHRRLRR. The interval 1-21 is disordered; sequence MTKLSRKLQTQKRHRRLRRSV.

This sequence belongs to the universal ribosomal protein uL18 family. In terms of assembly, part of the 50S ribosomal subunit; part of the 5S rRNA/L5/L18/L25 subcomplex. Contacts the 5S and 23S rRNAs.

Its function is as follows. This is one of the proteins that bind and probably mediate the attachment of the 5S RNA into the large ribosomal subunit, where it forms part of the central protuberance. This chain is Large ribosomal subunit protein uL18, found in Prochlorococcus marinus (strain MIT 9312).